A 274-amino-acid chain; its full sequence is 3-methyl-2-oxobutanoate hydroxymethyltransferase (274 aa).

Mg(2+)-binding residues include D49 and D88. 3-methyl-2-oxobutanoate contacts are provided by residues D49–S50, D88, and K118. E120 contributes to the Mg(2+) binding site. E187 functions as the Proton acceptor in the catalytic mechanism.

This sequence belongs to the PanB family. As to quaternary structure, homodecamer; pentamer of dimers. Mg(2+) is required as a cofactor.

Its subcellular location is the cytoplasm. The enzyme catalyses 3-methyl-2-oxobutanoate + (6R)-5,10-methylene-5,6,7,8-tetrahydrofolate + H2O = 2-dehydropantoate + (6S)-5,6,7,8-tetrahydrofolate. The protein operates within cofactor biosynthesis; (R)-pantothenate biosynthesis; (R)-pantoate from 3-methyl-2-oxobutanoate: step 1/2. Catalyzes the reversible reaction in which hydroxymethyl group from 5,10-methylenetetrahydrofolate is transferred onto alpha-ketoisovalerate to form ketopantoate. The polypeptide is 3-methyl-2-oxobutanoate hydroxymethyltransferase (Parvibaculum lavamentivorans (strain DS-1 / DSM 13023 / NCIMB 13966)).